A 155-amino-acid chain; its full sequence is Small ribosomal subunit protein uS7c (155 aa).

It belongs to the universal ribosomal protein uS7 family. Part of the 30S ribosomal subunit.

The protein localises to the plastid. Its subcellular location is the chloroplast. Functionally, one of the primary rRNA binding proteins, it binds directly to 16S rRNA where it nucleates assembly of the head domain of the 30S subunit. This chain is Small ribosomal subunit protein uS7c (rps7), found in Saururus cernuus (Lizard's tail).